Here is an 83-residue protein sequence, read N- to C-terminus: Cardiotoxin 7a (83 aa).

The signal sequence occupies residues 1-21; it reads MKTLLLTLVVVTIVCLDLGYT. Cystine bridges form between cysteine 24/cysteine 43, cysteine 36/cysteine 61, cysteine 65/cysteine 76, and cysteine 77/cysteine 82.

The protein belongs to the three-finger toxin family. Short-chain subfamily. Orphan group XV sub-subfamily. Expressed by the venom gland.

Its subcellular location is the secreted. It localises to the target cell membrane. In terms of biological role, has low cytotoxic activity. In Naja atra (Chinese cobra), this protein is Cardiotoxin 7a.